Here is a 1476-residue protein sequence, read N- to C-terminus: SH3 and multiple ankyrin repeat domains protein 2 (1476 aa).

Over residues 66–76 (LSPQLLQQTPS) the composition is skewed to polar residues. The tract at residues 66-134 (LSPQLLQQTP…GANKDSLSTF (69 aa)) is disordered. The 60-residue stretch at 147 to 206 (VPGRLFVAVKPYQPQVDGEIPLHRGDRVKVLSIGEGGFWEGSARGHIGWFPAECVEEVQC) folds into the SH3 domain. Val162 carries the post-translational modification Phosphoserine. The region spanning 247 to 341 (TVVLQKKDNE…HLILKVVTVT (95 aa)) is the PDZ domain. At Ser372 the chain carries Phosphoserine. Residues 391–412 (RKKKDKPEEIVPASKPSRTAEN) form a disordered region. Ser456 bears the Phosphoserine mark. Thr485 carries the post-translational modification Phosphothreonine. The segment at 503–533 (LSMPDTSEDIPPPPQSVPPSPPPPSPTTYNC) is disordered. Residues 512 to 528 (IPPPPQSVPPSPPPPSP) show a composition bias toward pro residues. Ser586 carries the phosphoserine modification. Disordered stretches follow at residues 659–916 (TIIV…KDRR), 946–983 (VPMA…TEGA), and 1057–1153 (PALA…ESMD). A compositionally biased stretch (low complexity) spans 666–678 (STSSSGKSSQGSS). The segment covering 711-722 (VRDREKRLEARR) has biased composition (basic and acidic residues). Residue Ser724 is modified to Phosphoserine. Positions 783-795 (LGGGEAGAQGEAG) are enriched in gly residues. Residues 833–846 (RLLDPSSPLALALS) are compositionally biased toward low complexity. Composition is skewed to basic and acidic residues over residues 847–868 (ARDR…KADL) and 899–916 (RRQE…KDRR). A Phosphothreonine modification is found at Thr903. A compositionally biased stretch (polar residues) spans 1070–1085 (TSQPPTLNSSQPANST). Basic and acidic residues predominate over residues 1119–1130 (VDSRSSSDHHLE). The segment covering 1131–1151 (TTSTISTVSSISTLSSEGGES) has biased composition (low complexity). The SH3-binding motif lies at 1169–1175 (PPVPPKP). Disordered regions lie at residues 1195-1216 (EDTD…SAQA) and 1260-1403 (NRGK…ISNK). The span at 1202–1212 (IPPPAPPPPPG) shows a compositional bias: pro residues. Residues 1291 to 1305 (STVSGTRSTTVTFTV) are compositionally biased toward low complexity. O-linked (GlcNAc) threonine glycosylation is present at Thr1292. Polar residues predominate over residues 1307–1317 (PGTSQPITLQS). 2 positions are modified to phosphoserine: Ser1334 and Ser1338. Residues 1364 to 1375 (LSDVFSLPSQSP) are compositionally biased toward polar residues. The span at 1387-1401 (RSRSPSPSILQQPIS) shows a compositional bias: low complexity. Positions 1413–1476 (WTKPDVADWL…ERALKQLLDR (64 aa)) constitute an SAM domain.

It belongs to the SHANK family. Is part of a complex with DLG4/PSD-95 and DLGAP1/GKAP. Interacts with CTTN/cortactin SH3 domain, DLGAP1/GKAP and alpha-latrotoxin receptor 1. Interacts with DNM2, DBNL, GRID2, BAIAP2, SLC9A3, PLCB3 and CFTR. Interacts (via proline-rich region) with PDE4D. Interacts with ABI1 (via SH3 domain). In terms of tissue distribution, detected in brain (at protein level), where it is highly expressed in Purkinje cells.

The protein localises to the apical cell membrane. It localises to the cytoplasm. It is found in the synapse. Its subcellular location is the postsynaptic density. The protein resides in the cell projection. The protein localises to the dendritic spine. It localises to the growth cone. Functionally, seems to be an adapter protein in the postsynaptic density (PSD) of excitatory synapses that interconnects receptors of the postsynaptic membrane including NMDA-type and metabotropic glutamate receptors, and the actin-based cytoskeleton. May play a role in the structural and functional organization of the dendritic spine and synaptic junction. This Mus musculus (Mouse) protein is SH3 and multiple ankyrin repeat domains protein 2 (Shank2).